Consider the following 540-residue polypeptide: Protein SOSEKI 3 (540 aa).

The segment at 32–123 is DIX-like oligomerization domain; it reads KKVQIVYYLS…YVLKGSELFD (92 aa). Disordered stretches follow at residues 147-201 and 219-294; these read EPPS…DAKN and ADAS…SSLG. 2 stretches are compositionally biased toward low complexity: residues 150 to 163 and 185 to 194; these read SSRSMDDSSSSSSM and RSVSSSGVSP. Polar residues predominate over residues 221-244; the sequence is ASTQTDETVSGRSKTPIETFSRGV. Residues 246–256 show a composition bias toward acidic residues; it reads TDEDVSSEPET. Residues 280-292 show a composition bias toward low complexity; it reads NSVSPPFSNSASS. The Association to cell membranes motif lies at 342–343; that stretch reads CG. The disordered stretch occupies residues 412 to 492; that stretch reads KKDAADSNAS…KNIPCTTKTH (81 aa). Positions 418-437 are enriched in polar residues; it reads SNASLKRSSSYNGDRASNQM. Residues 471–482 are compositionally biased toward basic and acidic residues; sequence SEKRRDSSEDTT.

The protein belongs to the SOSEKI family. In terms of assembly, homodimer. Forms long polymer filaments with other SOKs proteins polymers (e.g. SOK1, SOK2, SOK3 and SOK4) crucial for polar localization and biological activity. Binds to ANGUSTIFOLIA (AN). As to expression, expressed during embryogenesis and in roots.

It localises to the cell membrane. Its function is as follows. SOSEKI proteins (SOK1-5) locally interpret global polarity cues and can influence cell division orientation to coordinate cell polarization relative to body axes, probably by guiding ANGUSTIFOLIA (AN) polarized localization. This chain is Protein SOSEKI 3, found in Arabidopsis thaliana (Mouse-ear cress).